Reading from the N-terminus, the 360-residue chain is 3-isopropylmalate dehydrogenase (360 aa).

76-89 (GPKWDTIERDIRPE) contacts NAD(+). Positions 96, 106, 134, and 224 each coordinate substrate. Positions 224, 248, and 252 each coordinate Mg(2+). 282 to 294 (GSAPDIAGKGIAN) is an NAD(+) binding site.

Belongs to the isocitrate and isopropylmalate dehydrogenases family. LeuB type 1 subfamily. In terms of assembly, homodimer. It depends on Mg(2+) as a cofactor. Mn(2+) serves as cofactor.

Its subcellular location is the cytoplasm. The catalysed reaction is (2R,3S)-3-isopropylmalate + NAD(+) = 4-methyl-2-oxopentanoate + CO2 + NADH. It participates in amino-acid biosynthesis; L-leucine biosynthesis; L-leucine from 3-methyl-2-oxobutanoate: step 3/4. In terms of biological role, catalyzes the oxidation of 3-carboxy-2-hydroxy-4-methylpentanoate (3-isopropylmalate) to 3-carboxy-4-methyl-2-oxopentanoate. The product decarboxylates to 4-methyl-2 oxopentanoate. This is 3-isopropylmalate dehydrogenase from Pseudomonas syringae pv. syringae (strain B728a).